Here is a 370-residue protein sequence, read N- to C-terminus: N-acetyldiaminopimelate deacetylase (370 aa).

The active site involves aspartate 67. Catalysis depends on glutamate 126, which acts as the Proton acceptor.

The protein belongs to the peptidase M20A family. N-acetyldiaminopimelate deacetylase subfamily.

The enzyme catalyses N-acetyl-(2S,6S)-2,6-diaminopimelate + H2O = (2S,6S)-2,6-diaminopimelate + acetate. The protein operates within amino-acid biosynthesis; L-lysine biosynthesis via DAP pathway; LL-2,6-diaminopimelate from (S)-tetrahydrodipicolinate (acetylase route): step 3/3. In terms of biological role, catalyzes the conversion of N-acetyl-diaminopimelate to diaminopimelate and acetate. This Exiguobacterium sibiricum (strain DSM 17290 / CCUG 55495 / CIP 109462 / JCM 13490 / 255-15) protein is N-acetyldiaminopimelate deacetylase.